The primary structure comprises 364 residues: Phosphoserine aminotransferase (364 aa).

Arg-46 serves as a coordination point for L-glutamate. Pyridoxal 5'-phosphate-binding positions include 80–81, Trp-106, Thr-157, Asp-176, and Gln-199; that span reads AR. Position 200 is an N6-(pyridoxal phosphate)lysine (Lys-200). Residue 241-242 participates in pyridoxal 5'-phosphate binding; the sequence is NT.

Belongs to the class-V pyridoxal-phosphate-dependent aminotransferase family. SerC subfamily. As to quaternary structure, homodimer. The cofactor is pyridoxal 5'-phosphate.

The protein localises to the cytoplasm. The catalysed reaction is O-phospho-L-serine + 2-oxoglutarate = 3-phosphooxypyruvate + L-glutamate. It carries out the reaction 4-(phosphooxy)-L-threonine + 2-oxoglutarate = (R)-3-hydroxy-2-oxo-4-phosphooxybutanoate + L-glutamate. Its pathway is amino-acid biosynthesis; L-serine biosynthesis; L-serine from 3-phospho-D-glycerate: step 2/3. It participates in cofactor biosynthesis; pyridoxine 5'-phosphate biosynthesis; pyridoxine 5'-phosphate from D-erythrose 4-phosphate: step 3/5. In terms of biological role, catalyzes the reversible conversion of 3-phosphohydroxypyruvate to phosphoserine and of 3-hydroxy-2-oxo-4-phosphonooxybutanoate to phosphohydroxythreonine. This chain is Phosphoserine aminotransferase, found in Vibrio cholerae serotype O1 (strain ATCC 39315 / El Tor Inaba N16961).